Reading from the N-terminus, the 445-residue chain is tRNA-2-methylthio-N(6)-dimethylallyladenosine synthase (445 aa).

Positions 2 to 117 (QGLYIKSYGC…LPELIVKARK (116 aa)) constitute an MTTase N-terminal domain. [4Fe-4S] cluster-binding residues include cysteine 11, cysteine 47, cysteine 80, cysteine 157, cysteine 161, and cysteine 164. In terms of domain architecture, Radical SAM core spans 143-374 (KNQKVSAFIS…QELVHKQQLE (232 aa)). The TRAM domain occupies 377-441 (KKMIGETHPV…KNHLTGIIPN (65 aa)).

This sequence belongs to the methylthiotransferase family. MiaB subfamily. Monomer. [4Fe-4S] cluster serves as cofactor.

It localises to the cytoplasm. The catalysed reaction is N(6)-dimethylallyladenosine(37) in tRNA + (sulfur carrier)-SH + AH2 + 2 S-adenosyl-L-methionine = 2-methylsulfanyl-N(6)-dimethylallyladenosine(37) in tRNA + (sulfur carrier)-H + 5'-deoxyadenosine + L-methionine + A + S-adenosyl-L-homocysteine + 2 H(+). In terms of biological role, catalyzes the methylthiolation of N6-(dimethylallyl)adenosine (i(6)A), leading to the formation of 2-methylthio-N6-(dimethylallyl)adenosine (ms(2)i(6)A) at position 37 in tRNAs that read codons beginning with uridine. This chain is tRNA-2-methylthio-N(6)-dimethylallyladenosine synthase, found in Ehrlichia ruminantium (strain Welgevonden).